Consider the following 332-residue polypeptide: Ribosomal RNA small subunit methyltransferase H (332 aa).

S-adenosyl-L-methionine is bound by residues 36–38 (GGY), Asp54, Phe81, Asp102, and Gln109.

It belongs to the methyltransferase superfamily. RsmH family.

The protein resides in the cytoplasm. It catalyses the reaction cytidine(1402) in 16S rRNA + S-adenosyl-L-methionine = N(4)-methylcytidine(1402) in 16S rRNA + S-adenosyl-L-homocysteine + H(+). Its function is as follows. Specifically methylates the N4 position of cytidine in position 1402 (C1402) of 16S rRNA. This is Ribosomal RNA small subunit methyltransferase H from Nitrobacter winogradskyi (strain ATCC 25391 / DSM 10237 / CIP 104748 / NCIMB 11846 / Nb-255).